The chain runs to 546 residues: T-complex protein 1 subunit zeta (546 aa).

Serine 2 bears the N-acetylserine mark. Serine 249 is modified (phosphoserine).

Belongs to the TCP-1 chaperonin family. In terms of assembly, heterooligomeric complex of about 850 to 900 kDa that forms two stacked rings, 12 to 16 nm in diameter.

Its subcellular location is the cytoplasm. Its function is as follows. Molecular chaperone; assists the folding of proteins upon ATP hydrolysis. Known to play a role, in vitro, in the folding of actin and tubulin. In yeast may play a role in mitotic spindle formation. This Saccharomyces cerevisiae (strain ATCC 204508 / S288c) (Baker's yeast) protein is T-complex protein 1 subunit zeta (CCT6).